A 380-amino-acid polypeptide reads, in one-letter code: Peptide chain release factor 1-like, mitochondrial (380 aa).

A mitochondrion-targeting transit peptide spans 1–26 (MRSRVLWGAARWLWPRRAVGPARRPL). A coiled-coil region spans residues 63–117 (ELLAVIKLLNEKERELRETEHLLHDENEDLRKLAENEITLCQKEITQLKHQIILL). Residues 236 to 300 (PKDLRIDTKR…LRAKLYSMHL (65 aa)) form a GGQ domain region. Positions 250-252 (GGQ) match the GGQ motif. Gln252 carries the post-translational modification N5-methylglutamine.

This sequence belongs to the prokaryotic/mitochondrial release factor family. Methylation of glutamine in the GGQ triplet by HEMK1 is conserved from bacteria to mammals. In terms of tissue distribution, expressed in skeletal muscle (at protein level).

The protein localises to the mitochondrion. Functionally, mitochondrial peptide chain release factor that directs the termination of translation in response to the peptide chain termination codons UAA and UAG. The protein is Peptide chain release factor 1-like, mitochondrial of Homo sapiens (Human).